The primary structure comprises 595 residues: (E)-beta-ocimene synthase, chloroplastic (595 aa).

The N-terminal 32 residues, 1–32 (MSTISINLMSIIRNPLHSKSKRALINKHPSSS), are a transit peptide targeting the chloroplast. Mn(2+) is bound by residues aspartate 350 and aspartate 354. The short motif at 350-354 (DDVYD) is the DDXXD motif element. Homodimerization stretches follow at residues 356–362 (YGTLDEL) and 428–465 (EEEW…LSIP). Mn(2+) contacts are provided by asparagine 493 and glutamate 501.

This sequence belongs to the terpene synthase family. In terms of assembly, homodimer. Mn(2+) is required as a cofactor. It depends on Mg(2+) as a cofactor. As to expression, expressed in peltate glandular trichomes. Present in flowers, leaves and stems.

Its subcellular location is the plastid. It is found in the chloroplast. The enzyme catalyses (2E)-geranyl diphosphate = (E)-beta-ocimene + diphosphate. It functions in the pathway secondary metabolite biosynthesis; terpenoid biosynthesis. Functionally, involved in the biosynthesis of monoterpenes natural products. Monoterpene synthase that catalyzes mainly the formation of (E)-beta-ocimene and minor amounts of other monoterpenes (e.g. myrcene, (Z)-beta-ocimene, alpha- and gamma-terpinene) from geranyl diphosphate (GPP). This Origanum vulgare (Wild marjoram) protein is (E)-beta-ocimene synthase, chloroplastic.